The sequence spans 268 residues: 4-hydroxy-tetrahydrodipicolinate reductase (268 aa).

NAD(+) contacts are provided by residues 8–13 (GAAGRM) and aspartate 35. Arginine 36 provides a ligand contact to NADP(+). Residues 99–101 (GTT) and 123–126 (AANF) each bind NAD(+). Histidine 156 functions as the Proton donor/acceptor in the catalytic mechanism. (S)-2,3,4,5-tetrahydrodipicolinate is bound at residue histidine 157. Lysine 160 serves as the catalytic Proton donor. 166–167 (GT) is a binding site for (S)-2,3,4,5-tetrahydrodipicolinate.

It belongs to the DapB family.

It is found in the cytoplasm. It carries out the reaction (S)-2,3,4,5-tetrahydrodipicolinate + NAD(+) + H2O = (2S,4S)-4-hydroxy-2,3,4,5-tetrahydrodipicolinate + NADH + H(+). It catalyses the reaction (S)-2,3,4,5-tetrahydrodipicolinate + NADP(+) + H2O = (2S,4S)-4-hydroxy-2,3,4,5-tetrahydrodipicolinate + NADPH + H(+). It participates in amino-acid biosynthesis; L-lysine biosynthesis via DAP pathway; (S)-tetrahydrodipicolinate from L-aspartate: step 4/4. Catalyzes the conversion of 4-hydroxy-tetrahydrodipicolinate (HTPA) to tetrahydrodipicolinate. In Pseudomonas aeruginosa (strain LESB58), this protein is 4-hydroxy-tetrahydrodipicolinate reductase.